The following is a 287-amino-acid chain: Agamous-like MADS-box protein AGL53 (287 aa).

Residues 30 to 78 (STAKKTTNLSMREQTMFKKALELSTLCNIDVCVIYYGRDGKLIKTWPED) enclose the MADS-box domain. The tract at residues 151–171 (EFGQTRAVSSTTNPLSPPPSL) is disordered.

As to quaternary structure, interacts with MEE14/CBP1.

The protein resides in the nucleus. In terms of biological role, probable transcription factor that may function in the maintenance of the proper function of the central cell in pollen tube attraction. The protein is Agamous-like MADS-box protein AGL53 of Arabidopsis thaliana (Mouse-ear cress).